The following is a 79-amino-acid chain: MTDIKIDQTLDTLGLRCPEPVMLTRKTIRNMAEGEVLLIVADDPATTRDISSFCEFMDHQLLNSETENTPYRYWVKKGL.

Cys-17 (cysteine persulfide intermediate) is an active-site residue.

Belongs to the sulfur carrier protein TusA family.

It localises to the cytoplasm. In terms of biological role, sulfur carrier protein which probably makes part of a sulfur-relay system. The protein is Sulfur carrier protein TusA of Actinobacillus pleuropneumoniae serotype 5b (strain L20).